A 556-amino-acid chain; its full sequence is 2-isopropylmalate synthase (556 aa).

In terms of domain architecture, Pyruvate carboxyltransferase spans 33 to 307 (PIWCSSDLRD…HPQLDFSDID (275 aa)). The Mg(2+) site is built by aspartate 42, histidine 246, histidine 248, and asparagine 282. The tract at residues 439-556 (ATSPYVLASH…AVTQAEAKAA (118 aa)) is regulatory domain.

This sequence belongs to the alpha-IPM synthase/homocitrate synthase family. LeuA type 2 subfamily. In terms of assembly, homodimer. It depends on Mg(2+) as a cofactor.

The protein resides in the cytoplasm. The enzyme catalyses 3-methyl-2-oxobutanoate + acetyl-CoA + H2O = (2S)-2-isopropylmalate + CoA + H(+). It functions in the pathway amino-acid biosynthesis; L-leucine biosynthesis; L-leucine from 3-methyl-2-oxobutanoate: step 1/4. Functionally, catalyzes the condensation of the acetyl group of acetyl-CoA with 3-methyl-2-oxobutanoate (2-ketoisovalerate) to form 3-carboxy-3-hydroxy-4-methylpentanoate (2-isopropylmalate). The protein is 2-isopropylmalate synthase of Pseudomonas aeruginosa (strain ATCC 15692 / DSM 22644 / CIP 104116 / JCM 14847 / LMG 12228 / 1C / PRS 101 / PAO1).